A 466-amino-acid chain; its full sequence is Cysteine--tRNA ligase (466 aa).

A Zn(2+)-binding site is contributed by cysteine 33. A 'HIGH' region motif is present at residues 35-45; it reads PTVYDYAHIGN. The Zn(2+) site is built by cysteine 221, histidine 246, and glutamate 250. The 'KMSKS' region motif lies at 279–283; it reads KMSKS. Residue lysine 282 participates in ATP binding.

The protein belongs to the class-I aminoacyl-tRNA synthetase family. In terms of assembly, monomer. The cofactor is Zn(2+).

The protein resides in the cytoplasm. The enzyme catalyses tRNA(Cys) + L-cysteine + ATP = L-cysteinyl-tRNA(Cys) + AMP + diphosphate. The protein is Cysteine--tRNA ligase of Rhizobium meliloti (strain 1021) (Ensifer meliloti).